The sequence spans 346 residues: S-adenosylmethionine:tRNA ribosyltransferase-isomerase (346 aa).

This sequence belongs to the QueA family. Monomer.

Its subcellular location is the cytoplasm. The catalysed reaction is 7-aminomethyl-7-carbaguanosine(34) in tRNA + S-adenosyl-L-methionine = epoxyqueuosine(34) in tRNA + adenine + L-methionine + 2 H(+). It participates in tRNA modification; tRNA-queuosine biosynthesis. Functionally, transfers and isomerizes the ribose moiety from AdoMet to the 7-aminomethyl group of 7-deazaguanine (preQ1-tRNA) to give epoxyqueuosine (oQ-tRNA). The sequence is that of S-adenosylmethionine:tRNA ribosyltransferase-isomerase from Neisseria meningitidis serogroup C (strain 053442).